Here is a 333-residue protein sequence, read N- to C-terminus: Adenosine deaminase (333 aa).

Zn(2+)-binding residues include His12 and His14. The substrate site is built by His14, Asp16, and Gly170. Residue His197 coordinates Zn(2+). Glu200 serves as the catalytic Proton donor. Asp278 contacts Zn(2+). Asp279 is a substrate binding site.

The protein belongs to the metallo-dependent hydrolases superfamily. Adenosine and AMP deaminases family. Adenosine deaminase subfamily. Zn(2+) serves as cofactor.

The catalysed reaction is adenosine + H2O + H(+) = inosine + NH4(+). The enzyme catalyses 2'-deoxyadenosine + H2O + H(+) = 2'-deoxyinosine + NH4(+). Functionally, catalyzes the hydrolytic deamination of adenosine and 2-deoxyadenosine. The protein is Adenosine deaminase of Shigella sonnei (strain Ss046).